Reading from the N-terminus, the 301-residue chain is MTNTQFYITNFLNHIKLQKGDSSHTLRAYKNDLEEFFNFAKVEPEKVEPIVIRGFISEQILKGKSKTTVARKLSTLRSFFSYLYSEGFIKINPARVVSSVKIKRALPKFLTVDDAFKLVEAPSEDKFTVQRDKAILELFYSSGIRVSELCGLNLEDLDLKEGLIKVRGKGKKERIVPVGQKAKEALKKYLAIRQILRIKKKLSLDETPLFINNRGQRISDRQVRRIVEKYAKFIGVLEKIGPHTLRHTFASHLLMEGADLRVIQELLGHASLSTTQIYTHVDLKHLIEVYDKSHPLSKEDE.

Residues 2–84 enclose the Core-binding (CB) domain; sequence TNTQFYITNF…TLRSFFSYLY (83 aa). The Tyr recombinase domain occupies 105-291; that stretch reads ALPKFLTVDD…DLKHLIEVYD (187 aa). Catalysis depends on residues R145, K169, H243, R246, and H269. The active-site O-(3'-phospho-DNA)-tyrosine intermediate is the Y278.

This sequence belongs to the 'phage' integrase family. XerC subfamily. Forms a cyclic heterotetrameric complex composed of two molecules of XerC and two molecules of XerD.

The protein localises to the cytoplasm. Its function is as follows. Site-specific tyrosine recombinase, which acts by catalyzing the cutting and rejoining of the recombining DNA molecules. The XerC-XerD complex is essential to convert dimers of the bacterial chromosome into monomers to permit their segregation at cell division. It also contributes to the segregational stability of plasmids. The protein is Tyrosine recombinase XerC of Thermodesulfovibrio yellowstonii (strain ATCC 51303 / DSM 11347 / YP87).